A 111-amino-acid polypeptide reads, in one-letter code: UPF0145 protein Bphy_3680 (111 aa).

This sequence belongs to the UPF0145 family.

This chain is UPF0145 protein Bphy_3680, found in Paraburkholderia phymatum (strain DSM 17167 / CIP 108236 / LMG 21445 / STM815) (Burkholderia phymatum).